We begin with the raw amino-acid sequence, 1220 residues long: Pesticidal crystal protein Cry5Ac (1220 aa).

The interval 1194 to 1220 is disordered; the sequence is PLPTDDQNSEGNTAFSTNSDTSMNNNQ. The span at 1198 to 1220 shows a compositional bias: polar residues; that stretch reads DDQNSEGNTAFSTNSDTSMNNNQ.

This sequence belongs to the delta endotoxin family.

Promotes colloidosmotic lysis by binding to the midgut epithelial cells of hymenopteran species. The polypeptide is Pesticidal crystal protein Cry5Ac (cry5Ac) (Bacillus thuringiensis).